Here is a 644-residue protein sequence, read N- to C-terminus: Phosphatidylinositol polyphosphate 5-phosphatase type IV (644 aa).

Positions 1–193 are disordered; it reads MPSKAENLRP…RLPSLLPPRP (193 aa). Repeat copies occupy residues 10–13, 15–18, 28–31, 39–42, 55–58, 69–71, 72–74, and 75–78. The segment at 10–242 is 13 X 4 AA repeats of P-X-X-P; the sequence is PSEPAPQPPE…SLGPGRPRSP (233 aa). Positions 78-90 are enriched in basic and acidic residues; it reads PRLERALSLDDKG. A Phosphoserine modification is found at Ser99. Positions 107–118 are enriched in polar residues; it reads NGTSPSRGSVQS. Repeat 9 spans residues 121-124; the sequence is PGAP. A compositionally biased stretch (low complexity) spans 152–163; that stretch reads GSPSSGGNPLSG. A run of 4 repeats spans residues 169–172, 183–185, 190–193, and 236–239. Ser241 and Ser256 each carry phosphoserine. Cys641 carries the post-translational modification Cysteine methyl ester. Cys641 is lipidated: S-farnesyl cysteine. The propeptide at 642-644 is removed in mature form; it reads SVS.

The protein belongs to the inositol 1,4,5-trisphosphate 5-phosphatase type IV family. Interacts (when prenylated) with PDE6D; this is important for normal location in cilia. Detected in brain, heart, pancreas, testis and spleen.

The protein resides in the cytoplasm. It localises to the cytoskeleton. Its subcellular location is the cilium axoneme. It is found in the golgi apparatus. The protein localises to the golgi stack membrane. The protein resides in the cell membrane. It localises to the cell projection. Its subcellular location is the ruffle. It is found in the nucleus. The catalysed reaction is a 1,2-diacyl-sn-glycero-3-phospho-(1D-myo-inositol-4,5-bisphosphate) + H2O = a 1,2-diacyl-sn-glycero-3-phospho-(1D-myo-inositol 4-phosphate) + phosphate. It carries out the reaction a 1,2-diacyl-sn-glycero-3-phospho-(1D-myo-inositol-3,4,5-trisphosphate) + H2O = a 1,2-diacyl-sn-glycero-3-phospho-(1D-myo-inositol-3,4-bisphosphate) + phosphate. The enzyme catalyses a 1,2-diacyl-sn-glycero-3-phospho-(1D-myo-inositol-3,5-bisphosphate) + H2O = a 1,2-diacyl-sn-glycero-3-phospho-(1D-myo-inositol-3-phosphate) + phosphate. With respect to regulation, active in the presence of octyl-glucoside or Triton X-100, but completely inhibited by CTAB. Phosphatidylinositol (PtdIns) phosphatase that specifically hydrolyzes the 5-phosphate of phosphatidylinositol-3,4,5-trisphosphate (PtdIns(3,4,5)P3), phosphatidylinositol 4,5-bisphosphate (PtdIns(4,5)P2) and phosphatidylinositol 3,5-bisphosphate (PtdIns(3,5)P2). Specific for lipid substrates, inactive towards water soluble inositol phosphates. Plays an essential role in the primary cilium by controlling ciliary growth and phosphoinositide 3-kinase (PI3K) signaling and stability. The chain is Phosphatidylinositol polyphosphate 5-phosphatase type IV (INPP5E) from Homo sapiens (Human).